Reading from the N-terminus, the 479-residue chain is Pup--protein ligase (479 aa).

Glu-17 is a binding site for Mg(2+). ATP is bound at residue Arg-62. Position 64 (Tyr-64) interacts with Mg(2+). Asp-66 serves as the catalytic Proton acceptor. Residue Glu-72 coordinates Mg(2+). ATP is bound by residues Ser-75 and Trp-432.

The protein belongs to the Pup ligase/Pup deamidase family. Pup-conjugating enzyme subfamily.

The enzyme catalyses ATP + [prokaryotic ubiquitin-like protein]-L-glutamate + [protein]-L-lysine = ADP + phosphate + N(6)-([prokaryotic ubiquitin-like protein]-gamma-L-glutamyl)-[protein]-L-lysine.. The protein operates within protein degradation; proteasomal Pup-dependent pathway. It participates in protein modification; protein pupylation. Its function is as follows. Catalyzes the covalent attachment of the prokaryotic ubiquitin-like protein modifier Pup to the proteasomal substrate proteins, thereby targeting them for proteasomal degradation. This tagging system is termed pupylation. The ligation reaction involves the side-chain carboxylate of the C-terminal glutamate of Pup and the side-chain amino group of a substrate lysine. The sequence is that of Pup--protein ligase from Corynebacterium diphtheriae (strain ATCC 700971 / NCTC 13129 / Biotype gravis).